We begin with the raw amino-acid sequence, 153 residues long: UPF0311 protein Rpal_1987 (153 aa).

Belongs to the UPF0311 family.

This is UPF0311 protein Rpal_1987 from Rhodopseudomonas palustris (strain TIE-1).